Consider the following 89-residue polypeptide: Small ribosomal subunit protein uS15 (89 aa).

Belongs to the universal ribosomal protein uS15 family. Part of the 30S ribosomal subunit. Forms a bridge to the 50S subunit in the 70S ribosome, contacting the 23S rRNA.

One of the primary rRNA binding proteins, it binds directly to 16S rRNA where it helps nucleate assembly of the platform of the 30S subunit by binding and bridging several RNA helices of the 16S rRNA. In terms of biological role, forms an intersubunit bridge (bridge B4) with the 23S rRNA of the 50S subunit in the ribosome. This is Small ribosomal subunit protein uS15 from Dinoroseobacter shibae (strain DSM 16493 / NCIMB 14021 / DFL 12).